A 444-amino-acid polypeptide reads, in one-letter code: uncharacterized protein (444 aa).

Position 268 is an N6-(pyridoxal phosphate)lysine (Lys-268).

It belongs to the class-III pyridoxal-phosphate-dependent aminotransferase family. The cofactor is pyridoxal 5'-phosphate.

This is an uncharacterized protein from Bacillus subtilis (strain 168).